The sequence spans 510 residues: ATP synthase subunit alpha (510 aa).

Residue 169 to 176 (GDRQTGKT) coordinates ATP.

The protein belongs to the ATPase alpha/beta chains family. F-type ATPases have 2 components, CF(1) - the catalytic core - and CF(0) - the membrane proton channel. CF(1) has five subunits: alpha(3), beta(3), gamma(1), delta(1), epsilon(1). CF(0) has three main subunits: a(1), b(2) and c(9-12). The alpha and beta chains form an alternating ring which encloses part of the gamma chain. CF(1) is attached to CF(0) by a central stalk formed by the gamma and epsilon chains, while a peripheral stalk is formed by the delta and b chains.

It localises to the cell inner membrane. It carries out the reaction ATP + H2O + 4 H(+)(in) = ADP + phosphate + 5 H(+)(out). Functionally, produces ATP from ADP in the presence of a proton gradient across the membrane. The alpha chain is a regulatory subunit. The polypeptide is ATP synthase subunit alpha (Nitrobacter hamburgensis (strain DSM 10229 / NCIMB 13809 / X14)).